Here is a 310-residue protein sequence, read N- to C-terminus: Protease HtpX homolog (310 aa).

Helical transmembrane passes span 16–36 (NAVLATYCVIFAFIGLLVDVI) and 55–75 (IFPTITIIMFLVAFVIIVVCI). Residue His-166 coordinates Zn(2+). Glu-167 is a catalytic residue. Zn(2+) is bound at residue His-170. 2 consecutive transmembrane segments (helical) span residues 182–202 (VGILSNIMLLVANFSVYFFMG) and 214–234 (MILLVLQIILPFLTLLLQMYL). A Zn(2+)-binding site is contributed by Glu-239.

Belongs to the peptidase M48B family. The cofactor is Zn(2+).

It is found in the cell inner membrane. The chain is Protease HtpX homolog from Helicobacter pylori (strain Shi470).